The chain runs to 197 residues: Probable nicotinate-nucleotide adenylyltransferase (197 aa).

Belongs to the NadD family.

It catalyses the reaction nicotinate beta-D-ribonucleotide + ATP + H(+) = deamido-NAD(+) + diphosphate. It functions in the pathway cofactor biosynthesis; NAD(+) biosynthesis; deamido-NAD(+) from nicotinate D-ribonucleotide: step 1/1. In terms of biological role, catalyzes the reversible adenylation of nicotinate mononucleotide (NaMN) to nicotinic acid adenine dinucleotide (NaAD). The protein is Probable nicotinate-nucleotide adenylyltransferase of Bordetella parapertussis (strain 12822 / ATCC BAA-587 / NCTC 13253).